A 223-amino-acid polypeptide reads, in one-letter code: Ribose-5-phosphate isomerase A (223 aa).

Substrate-binding positions include 32–35 (TGST), 85–88 (DGAD), and 98–101 (KGGG). Residue Glu107 is the Proton acceptor of the active site. Substrate is bound at residue Lys125.

The protein belongs to the ribose 5-phosphate isomerase family. In terms of assembly, homodimer.

It carries out the reaction aldehydo-D-ribose 5-phosphate = D-ribulose 5-phosphate. It functions in the pathway carbohydrate degradation; pentose phosphate pathway; D-ribose 5-phosphate from D-ribulose 5-phosphate (non-oxidative stage): step 1/1. In terms of biological role, catalyzes the reversible conversion of ribose-5-phosphate to ribulose 5-phosphate. This chain is Ribose-5-phosphate isomerase A, found in Pseudomonas syringae pv. tomato (strain ATCC BAA-871 / DC3000).